Consider the following 411-residue polypeptide: Argininosuccinate synthase (411 aa).

11–19 serves as a coordination point for ATP; that stretch reads AYSGGLDTS. Tyrosine 88 is an L-citrulline binding site. Residue glycine 118 participates in ATP binding. L-aspartate-binding residues include threonine 120, asparagine 124, and aspartate 125. Residue asparagine 124 coordinates L-citrulline. Residues arginine 128, serine 176, glutamate 261, and tyrosine 273 each coordinate L-citrulline.

Belongs to the argininosuccinate synthase family. Type 1 subfamily. Homotetramer.

Its subcellular location is the cytoplasm. It catalyses the reaction L-citrulline + L-aspartate + ATP = 2-(N(omega)-L-arginino)succinate + AMP + diphosphate + H(+). It participates in amino-acid biosynthesis; L-arginine biosynthesis; L-arginine from L-ornithine and carbamoyl phosphate: step 2/3. The sequence is that of Argininosuccinate synthase from Lactiplantibacillus plantarum (strain ATCC BAA-793 / NCIMB 8826 / WCFS1) (Lactobacillus plantarum).